Consider the following 336-residue polypeptide: Electron transfer flavoprotein subunit alpha (336 aa).

275–303 (LYIACGISGAIQHLAGMQDSDYIIAINKD) lines the FAD pocket.

The protein belongs to the ETF alpha-subunit/FixB family. As to quaternary structure, heterodimer of an alpha and a beta subunit. FAD serves as cofactor.

Its function is as follows. The electron transfer flavoprotein serves as a specific electron acceptor for other dehydrogenases. It transfers the electrons to the main respiratory chain via ETF-ubiquinone oxidoreductase (ETF dehydrogenase). This Clostridium acetobutylicum (strain ATCC 824 / DSM 792 / JCM 1419 / IAM 19013 / LMG 5710 / NBRC 13948 / NRRL B-527 / VKM B-1787 / 2291 / W) protein is Electron transfer flavoprotein subunit alpha (etfA).